The primary structure comprises 478 residues: Glycogen synthase (478 aa).

An ADP-alpha-D-glucose-binding site is contributed by Lys20.

The protein belongs to the glycosyltransferase 1 family. Bacterial/plant glycogen synthase subfamily.

It carries out the reaction [(1-&gt;4)-alpha-D-glucosyl](n) + ADP-alpha-D-glucose = [(1-&gt;4)-alpha-D-glucosyl](n+1) + ADP + H(+). Its pathway is glycan biosynthesis; glycogen biosynthesis. In terms of biological role, synthesizes alpha-1,4-glucan chains using ADP-glucose. This is Glycogen synthase from Cereibacter sphaeroides (strain ATCC 17025 / ATH 2.4.3) (Rhodobacter sphaeroides).